The primary structure comprises 72 residues: Translation initiation factor IF-1 (72 aa).

Residues 1 to 72 enclose the S1-like domain; it reads MAKEEPIEVE…TRGRIIYRTK (72 aa).

It belongs to the IF-1 family. As to quaternary structure, component of the 30S ribosomal translation pre-initiation complex which assembles on the 30S ribosome in the order IF-2 and IF-3, IF-1 and N-formylmethionyl-tRNA(fMet); mRNA recruitment can occur at any time during PIC assembly.

Its subcellular location is the cytoplasm. In terms of biological role, one of the essential components for the initiation of protein synthesis. Stabilizes the binding of IF-2 and IF-3 on the 30S subunit to which N-formylmethionyl-tRNA(fMet) subsequently binds. Helps modulate mRNA selection, yielding the 30S pre-initiation complex (PIC). Upon addition of the 50S ribosomal subunit IF-1, IF-2 and IF-3 are released leaving the mature 70S translation initiation complex. The protein is Translation initiation factor IF-1 of Syntrophus aciditrophicus (strain SB).